The sequence spans 421 residues: Histidine--tRNA ligase (421 aa).

The protein belongs to the class-II aminoacyl-tRNA synthetase family. As to quaternary structure, homodimer.

Its subcellular location is the cytoplasm. It catalyses the reaction tRNA(His) + L-histidine + ATP = L-histidyl-tRNA(His) + AMP + diphosphate + H(+). This is Histidine--tRNA ligase from Nitrosomonas eutropha (strain DSM 101675 / C91 / Nm57).